The sequence spans 335 residues: MDERIISSETVDAEEVSFETSLRPQTLSQYIGQDKVKNNLTVFIEAATLRNEALDHVLLYGPPGLGKTTLAMVIASEMGSQIKTTSGPAIERPGDLATILTSLEPGDVLFIDEIHRLSRAIEEILYPAMEDYCLDIVIGTGPTARSVRLDLPPFTLIGATTRAGLLSAPLRDRFGVIDHLEFYTEEQLTEIVLRTAGILDTKIDDLGAREIARRSRGTPRIANRLLKRVRDFAQVRGNGTVTEKLAKEALTLLQVDPRGLDTIDQKLLHTIIQSFRGGPVGLDTIAASIGEERETIEDMQEPYLLQIGFLQRTPRGRIATETAYNHLGISYEKEV.

The segment at 1–183 (MDERIISSET…FGVIDHLEFY (183 aa)) is large ATPase domain (RuvB-L). Residues Leu-22, Arg-23, Gly-64, Lys-67, Thr-68, Thr-69, 130–132 (EDY), Arg-173, Tyr-183, and Arg-220 each bind ATP. Position 68 (Thr-68) interacts with Mg(2+). Positions 184 to 254 (TEEQLTEIVL…LAKEALTLLQ (71 aa)) are small ATPAse domain (RuvB-S). The interval 257 to 335 (PRGLDTIDQK…HLGISYEKEV (79 aa)) is head domain (RuvB-H). Arg-293, Arg-312, and Arg-317 together coordinate DNA.

This sequence belongs to the RuvB family. As to quaternary structure, homohexamer. Forms an RuvA(8)-RuvB(12)-Holliday junction (HJ) complex. HJ DNA is sandwiched between 2 RuvA tetramers; dsDNA enters through RuvA and exits via RuvB. An RuvB hexamer assembles on each DNA strand where it exits the tetramer. Each RuvB hexamer is contacted by two RuvA subunits (via domain III) on 2 adjacent RuvB subunits; this complex drives branch migration. In the full resolvosome a probable DNA-RuvA(4)-RuvB(12)-RuvC(2) complex forms which resolves the HJ.

Its subcellular location is the cytoplasm. It carries out the reaction ATP + H2O = ADP + phosphate + H(+). Its function is as follows. The RuvA-RuvB-RuvC complex processes Holliday junction (HJ) DNA during genetic recombination and DNA repair, while the RuvA-RuvB complex plays an important role in the rescue of blocked DNA replication forks via replication fork reversal (RFR). RuvA specifically binds to HJ cruciform DNA, conferring on it an open structure. The RuvB hexamer acts as an ATP-dependent pump, pulling dsDNA into and through the RuvAB complex. RuvB forms 2 homohexamers on either side of HJ DNA bound by 1 or 2 RuvA tetramers; 4 subunits per hexamer contact DNA at a time. Coordinated motions by a converter formed by DNA-disengaged RuvB subunits stimulates ATP hydrolysis and nucleotide exchange. Immobilization of the converter enables RuvB to convert the ATP-contained energy into a lever motion, pulling 2 nucleotides of DNA out of the RuvA tetramer per ATP hydrolyzed, thus driving DNA branch migration. The RuvB motors rotate together with the DNA substrate, which together with the progressing nucleotide cycle form the mechanistic basis for DNA recombination by continuous HJ branch migration. Branch migration allows RuvC to scan DNA until it finds its consensus sequence, where it cleaves and resolves cruciform DNA. The sequence is that of Holliday junction branch migration complex subunit RuvB from Listeria welshimeri serovar 6b (strain ATCC 35897 / DSM 20650 / CCUG 15529 / CIP 8149 / NCTC 11857 / SLCC 5334 / V8).